Reading from the N-terminus, the 179-residue chain is MSITTPRILGIDPGLRVTGFGVIELHGKQLVYVASGCIKSNDKESLPERIKTLFAGISEVIATYQPNQAAVEKVFVNVNPQSTLLLGQARGAAISALVHADLPVAEYTALQTKQAVVGHGKAAKDQVQAMVVRLLNLPGAPTADAADALACAIAHAHGGQGLGAMATAGYRIRGGRLIG.

Catalysis depends on residues Asp12, Glu72, and Asp144. Residues Asp12, Glu72, and Asp144 each coordinate Mg(2+).

It belongs to the RuvC family. As to quaternary structure, homodimer which binds Holliday junction (HJ) DNA. The HJ becomes 2-fold symmetrical on binding to RuvC with unstacked arms; it has a different conformation from HJ DNA in complex with RuvA. In the full resolvosome a probable DNA-RuvA(4)-RuvB(12)-RuvC(2) complex forms which resolves the HJ. It depends on Mg(2+) as a cofactor.

It localises to the cytoplasm. The catalysed reaction is Endonucleolytic cleavage at a junction such as a reciprocal single-stranded crossover between two homologous DNA duplexes (Holliday junction).. The RuvA-RuvB-RuvC complex processes Holliday junction (HJ) DNA during genetic recombination and DNA repair. Endonuclease that resolves HJ intermediates. Cleaves cruciform DNA by making single-stranded nicks across the HJ at symmetrical positions within the homologous arms, yielding a 5'-phosphate and a 3'-hydroxyl group; requires a central core of homology in the junction. The consensus cleavage sequence is 5'-(A/T)TT(C/G)-3'. Cleavage occurs on the 3'-side of the TT dinucleotide at the point of strand exchange. HJ branch migration catalyzed by RuvA-RuvB allows RuvC to scan DNA until it finds its consensus sequence, where it cleaves and resolves the cruciform DNA. The protein is Crossover junction endodeoxyribonuclease RuvC of Dechloromonas aromatica (strain RCB).